The chain runs to 846 residues: Cap-specific mRNA (nucleoside-2'-O-)-methyltransferase 1 (846 aa).

The tract at residues 1–81 is disordered; that stretch reads MKRKSDSEQQ…LPDTLAEGSS (81 aa). Residues 2–20 carry the Bipartite nuclear localization signal motif; sequence KRKSDSEQQPSVQCRKKKR. The span at 27-45 shows a compositional bias: polar residues; the sequence is NLSSTSDDDTQYSNHGTQE. A G-patch domain is found at 87-133; that stretch reads YNSVSQKLMAKMGFREGEGLGKFGQGRKEIVETSKQKGRRGLGMVLK. Residues 203–207 and Arg-218 each bind substrate; that span reads KSAFD. A RrmJ-type SAM-dependent 2'-O-MTase domain is found at 231–450; the sequence is FFLNRAAMKM…ERYVVCRGLK (220 aa). Asn-234 serves as a coordination point for S-adenosyl-L-methionine. The active site involves Lys-239. S-adenosyl-L-methionine is bound by residues 277–283 and 335–336; these read CAGPGGF and DV. Residue Asp-364 is part of the active site. 374–376 contacts substrate; sequence NIQ. The active-site Proton acceptor is the Lys-404. Asn-439 serves as a coordination point for substrate. The region spanning 752–786 is the WW domain; that stretch reads KTINEPWSMAYSKSQKRKYFYNSKTKNSQFELPVE.

Its subcellular location is the nucleus. The catalysed reaction is a 5'-end (N(7)-methyl 5'-triphosphoguanosine)-ribonucleoside in mRNA + S-adenosyl-L-methionine = a 5'-end (N(7)-methyl 5'-triphosphoguanosine)-(2'-O-methyl-ribonucleoside) in mRNA + S-adenosyl-L-homocysteine + H(+). Its function is as follows. S-adenosyl-L-methionine-dependent methyltransferase that mediates mRNA cap1 2'-O-ribose methylation to the 5'-cap structure of mRNAs. Methylates the ribose of the first nucleotide of a m(7)GpppG-capped mRNA and small nuclear RNA (snRNA) to produce m(7)GpppRm (cap1). Displays a preference for cap0 transcripts. Cap1 modification is linked to higher levels of translation. May be involved in the interferon response pathway. In Xenopus laevis (African clawed frog), this protein is Cap-specific mRNA (nucleoside-2'-O-)-methyltransferase 1 (cmtr1).